The primary structure comprises 340 residues: MGSTRVRIAIDAMGGDHAPGEIVAGALRAKEELGVEILLVGDPQQIEAALPPKTNLAQVEIVPAEEAIAMDEEPLNAVRRKRKASINVAMDLVKQQKADAVFSAGHSGAAMASALLRLGRLPGIDRPAIGTVFPTIVAGKPVLVLDVGANVDCRPKFLEQFAVMGSAYSQYVLGTTEPKVGLLNIGEEDSKGNDAAVRAHQLLRENSQINFIGNAEGRDVLSGHFDVIVCDGFVGNVLLKFAEAVGEVILQILREELPQGLHGQIGSAFLKPNLKRVKQRMDHAEHGGALLLGVAGVCFIGHGSSQAPSIFNAIRMAKEAVDNQVLQRIQSQYILERESG.

Belongs to the PlsX family. In terms of assembly, homodimer. Probably interacts with PlsY.

It localises to the cytoplasm. It carries out the reaction a fatty acyl-[ACP] + phosphate = an acyl phosphate + holo-[ACP]. Its pathway is lipid metabolism; phospholipid metabolism. Functionally, catalyzes the reversible formation of acyl-phosphate (acyl-PO(4)) from acyl-[acyl-carrier-protein] (acyl-ACP). This enzyme utilizes acyl-ACP as fatty acyl donor, but not acyl-CoA. The protein is Phosphate acyltransferase of Nostoc punctiforme (strain ATCC 29133 / PCC 73102).